A 156-amino-acid polypeptide reads, in one-letter code: Small ribosomal subunit protein uS7 (156 aa).

Belongs to the universal ribosomal protein uS7 family. As to quaternary structure, part of the 30S ribosomal subunit. Contacts proteins S9 and S11.

One of the primary rRNA binding proteins, it binds directly to 16S rRNA where it nucleates assembly of the head domain of the 30S subunit. Is located at the subunit interface close to the decoding center, probably blocks exit of the E-site tRNA. This chain is Small ribosomal subunit protein uS7, found in Geobacillus thermodenitrificans (strain NG80-2).